Here is a 284-residue protein sequence, read N- to C-terminus: Zinc finger protein ZAT3 (284 aa).

A compositionally biased stretch (basic and acidic residues) spans 1–12 (MNNNHSYDDRSF). The segment at 1–76 (MNNNHSYDDR…KPDPNAPKIT (76 aa)) is disordered. Over residues 18 to 37 (PSNTSNPNPNLQFALSSSYD) the composition is skewed to polar residues. Residues 47-62 (TVASSSSSSPKSASKP) are compositionally biased toward low complexity. 3 consecutive C2H2-type zinc fingers follow at residues 77 to 99 (RPCTECGRKFWSWKALFGHMRCH), 162 to 184 (FECGGCKKVFGSHQALGGHRASH), and 222 to 244 (HKCNICFRVFSSGQALGGHMRCH).

As to quaternary structure, interacts (via the EAR motif) with TPL. As to expression, expressed exclusively in pollen.

The protein localises to the nucleus. Functionally, mediates the regulation of male germ cell division by DUO1. In Arabidopsis thaliana (Mouse-ear cress), this protein is Zinc finger protein ZAT3.